We begin with the raw amino-acid sequence, 7073 residues long: Replicase polyprotein 1ab (7073 aa).

The Cytoplasmic segment spans residues M1–K2202. One can recognise a CoV Nsp1 globular domain in the interval T12–G127. Residues E148–G179 enclose the BetaCoV Nsp1 C-terminal domain. The CoV Nsp2 N-terminal domain maps to T183–R456. The Zn(2+) site is built by C200, C231, H234, H236, C323, C326, C341, C344, C370, C373, H382, and C416. A C2H2 region spans residues C200 to H236. Residues C323 to C344 form a C4 region. The tract at residues C370–C416 is C2HC. One can recognise a CoV Nsp2 middle domain in the interval R458 to M688. Residues I690–G818 enclose the CoV Nsp2 C-terminal domain. The region spanning K822–E930 is the Ubiquitin-like 1 domain. Disordered stretches follow at residues R972–V1003 and R1175–V1198. Residues E974 to P999 are compositionally biased toward acidic residues. Positions V1003 to L1169 constitute a Macro 1 domain. Macro domains lie at K1207–E1335 and I1343–S1470. Positions T1472 to S1538 constitute a DPUP domain. Residues V1542–V1597 form the Ubiquitin-like 2 domain. One can recognise a Peptidase C16 domain in the interval Y1611–G1875. Catalysis depends on C1651, which acts as the For PL-PRO activity. Zn(2+) is bound by residues C1729, C1732, C1764, and C1766. Residues C1729–C1766 form a C4-type zinc finger. Catalysis depends on for PL-PRO activity residues H1812 and D1826. The 111-residue stretch at P1888 to T1998 folds into the Nucleic acid-binding domain. The region spanning P2023–N2132 is the G2M domain. The helical transmembrane segment at L2203–V2223 threads the bilayer. The HD1 stretch occupies residues L2203 to M2324. The 71-residue stretch at T2224–D2294 folds into the 3Ecto domain. At T2224–E2303 the chain is on the lumenal side. Cystine bridges form between C2240/C2268 and C2259/C2265. Residues W2304–M2324 traverse the membrane as a helical segment. Topologically, residues Q2325 to T2754 are cytoplasmic. Residues K2372–D2462 are Y1. In terms of domain architecture, CoV Nsp3 Y spans K2372–G2740. Positions 2376, 2381, 2386, 2389, 2422, 2425, 2429, and 2432 each coordinate Zn(2+). The ZF1 stretch occupies residues H2376–C2389. The interval C2422–C2432 is ZF2. The tract at residues Q2463–V2557 is Y2. A coV-Y region spans residues Q2463–G2740. Residues G2558–D2639 are Y3. The Y4 stretch occupies residues L2640–G2740. Residues L2755 to I2775 form a helical membrane-spanning segment. The HD2 stretch occupies residues L2755–I3125. Residues H2776 to S3021 lie on the Lumenal side of the membrane. The helical transmembrane segment at A3022–M3042 threads the bilayer. The Cytoplasmic portion of the chain corresponds to K3043–S3076. Residues F3077–V3097 form a helical membrane-spanning segment. Residues S3098–Q3104 are Lumenal-facing. The helical transmembrane segment at W3105–I3125 threads the bilayer. At S3126–T3563 the chain is on the cytoplasmic side. Positions V3142 to Q3240 constitute a Nsp4C domain. The 306-residue stretch at S3241–Q3546 folds into the Peptidase C30 domain. Catalysis depends on for 3CL-PRO activity residues H3281 and C3385. A helical transmembrane segment spans residues F3564–Y3584. The HD3 stretch occupies residues F3564 to L3776. E3585 is a topological domain (lumenal). A helical transmembrane segment spans residues N3586–V3606. Over K3607–A3611 the chain is Cytoplasmic. Residues F3612 to M3632 traverse the membrane as a helical segment. The Lumenal segment spans residues P3633 to K3657. The helical transmembrane segment at D3658–Y3678 threads the bilayer. The Cytoplasmic segment spans residues D3679 to T3727. A helical membrane pass occupies residues I3728 to I3748. Over T3749 to C3755 the chain is Lumenal. The chain crosses the membrane as a helical span at residues I3756–L3776. The Cytoplasmic portion of the chain corresponds to L3777–N7073. The RdRp Nsp7 cofactor domain maps to S3837–Q3919. The RdRp Nsp8 cofactor domain occupies A3920–Q4117. One can recognise a Nsp9 ssRNA-binding domain in the interval N4118–Q4230. One can recognise an ExoN/MTase coactivator domain in the interval A4231 to Q4369. Residues C4304, C4307, H4313, C4320, C4347, C4350, C4358, and C4360 each contribute to the Zn(2+) site. 2 zinc fingers span residues C4304–C4320 and C4347–C4360. The region spanning F4376–L4630 is the NiRAN domain. Mn(2+) is bound by residues N4578 and D4587. Positions I4635 to S4733 constitute a Nsp12 Interface domain. Zn(2+) contacts are provided by H4664, C4670, C4675, C4679, and C4856. The Nsp12 RNA-dependent RNA polymerase domain occupies R4734–Q5301. Residues S4736–A4950 form a rdRp Fingers N-ter region. Residues T4951–P4989 are rdRp Palm N-ter. The region spanning P4981–G5143 is the RdRp catalytic domain. Residues K4990–G5048 form a rdRp Fingers C-ter region. Positions 5011, 5014, and 5015 each coordinate Zn(2+). Residues T5049–Q5184 are rdRp Palm C-ter. Residues S5128, D5129, and D5130 contribute to the active site. The tract at residues H5185–Q5301 is rdRp Thumb. Positions A5302–D5414 constitute a CV ZBD domain. Zn(2+) contacts are provided by C5306, C5309, C5317, C5320, C5327, C5330, H5334, H5340, C5351, C5356, C5373, and H5376. The (+)RNA virus helicase ATP-binding domain maps to N5558 to L5739. G5583–S5590 is a binding site for ATP. The region spanning G5740 to L5909 is the (+)RNA virus helicase C-terminal domain. Residues M5974–V6189 enclose the ExoN domain. Catalysis depends on residues D5992, E5994, and E6093. Mg(2+) is bound by residues E5994 and E6093. Residues C6109, C6112, C6128, H6131, H6159, C6163, and H6166 each contribute to the Zn(2+) site. Active-site residues include H6170 and D6175. Mg(2+) is bound by residues H6170 and D6175. A Zn(2+)-binding site is contributed by C6181. The N7-MTase domain maps to Y6198–Q6429. D6233 to A6239 provides a ligand contact to S-adenosyl-L-methionine. Residues C6316–T6330 are gpppA-binding. Positions 6354, 6375, 6386, and 6389 each coordinate Zn(2+). A Nsp15 N-terminal oligomerization domain is found at S6430–R6490. In terms of domain architecture, AV-Nsp11N/CoV-Nsp15M spans N6491–Q6616. One can recognise a NendoU domain in the interval K6633–P6772. Residues H6663, H6678, K6718, K6821, D6905, K6945, and E6978 contribute to the active site. Residues S6777–V7071 enclose the Nidovirus-type SAM-dependent 2'-O-MTase domain.

This sequence belongs to the coronaviruses polyprotein 1ab family. Interacts with host PHB and PHB2. As to quaternary structure, interacts with papain-like protease nsp3 and non-structural protein 6. In terms of assembly, monomer. Homodimer. Only the homodimer shows catalytic activity. Interacts with nsp8 and nsp12 to form the replication-transcription complex (RTC): nsp12, nsp7, two subunits of nsp8, and up to two subunits of nsp13. Eight copies of nsp7 and eight copies of nsp8 assemble to form a heterohexadecamer dsRNA-encircling ring structure. As to quaternary structure, interacts with nsp7, nsp13 and nsp12 to form the replication-transcription complex (RTC): nsp12, nsp7, two subunits of nsp8, and up to two subunits of nsp13. Eight copies of nsp7 and eight copies of nsp8 assemble to form a heterohexadecamer dsRNA-encircling ring structure. Interacts with ORF6 protein. In terms of assembly, homodimer. Interacts with nsp12. Homododecamer. Interacts with proofreading exoribonuclease nsp14 and 2'-O-methyltransferase nsp16; these interactions enhance nsp14 and nsp16 enzymatic activities. As to quaternary structure, interacts with nsp7 and nsp8 to form the replication-transcription complex (RTC): nsp12, nsp7, two subunits of nsp8, and up to two subunits of nsp13. Interacts with nsp9. In terms of assembly, interacts with nsp8 to form the replication-transcription complex (RTC): nsp12, nsp7, two subunits of nsp8, and up to two subunits of nsp13. Interacts (via N-terminus) with host DDX1. Interacts with non-structural protein 10. As to quaternary structure, homohexamer. In terms of assembly, interacts with nsp10. It depends on Zn(2+) as a cofactor. Mn(2+) is required as a cofactor. The cofactor is Mg(2+). Specific enzymatic cleavages in vivo by its own proteases yield mature proteins. 3C-like proteinase nsp5 liberates nsps 6-16 from the polyprotein. Papain-like and 3C-like proteinases are autocatalytically processed.

It localises to the host cytoplasm. Its subcellular location is the host endosome. It is found in the host membrane. The protein localises to the host Golgi apparatus. The protein resides in the host perinuclear region. It localises to the host endoplasmic reticulum. Its subcellular location is the host endoplasmic reticulum-Golgi intermediate compartment. The enzyme catalyses RNA(n) + a ribonucleoside 5'-triphosphate = RNA(n+1) + diphosphate. It carries out the reaction ATP + H2O = ADP + phosphate + H(+). It catalyses the reaction TSAVLQ-|-SGFRK-NH2 and SGVTFQ-|-GKFKK the two peptides corresponding to the two self-cleavage sites of the SARS 3C-like proteinase are the two most reactive peptide substrates. The enzyme exhibits a strong preference for substrates containing Gln at P1 position and Leu at P2 position.. The catalysed reaction is Thiol-dependent hydrolysis of ester, thioester, amide, peptide and isopeptide bonds formed by the C-terminal Gly of ubiquitin (a 76-residue protein attached to proteins as an intracellular targeting signal).. The enzyme catalyses a 5'-end (N(7)-methyl 5'-triphosphoguanosine)-ribonucleoside in mRNA + S-adenosyl-L-methionine = a 5'-end (N(7)-methyl 5'-triphosphoguanosine)-(2'-O-methyl-ribonucleoside) in mRNA + S-adenosyl-L-homocysteine + H(+). It carries out the reaction uridylyl-uridylyl-ribonucleotide-RNA = a 3'-end uridylyl-2',3'-cyclophospho-uridine-RNA + a 5'-end dephospho-ribonucleoside-RNA. It catalyses the reaction a 5'-end (5'-triphosphoguanosine)-ribonucleoside in mRNA + S-adenosyl-L-methionine = a 5'-end (N(7)-methyl 5'-triphosphoguanosine)-ribonucleoside in mRNA + S-adenosyl-L-homocysteine. The catalysed reaction is a 5'-end diphospho-ribonucleoside in mRNA + GTP + H(+) = a 5'-end (5'-triphosphoguanosine)-ribonucleoside in mRNA + diphosphate. Inhibited by Remdesivir (GS-5734). Functionally, multifunctional protein involved in the transcription and replication of viral RNAs. Contains the proteinases responsible for the cleavages of the polyprotein. Its function is as follows. Inhibits host translation by interacting with the 40S ribosomal subunit. The nsp1-40S ribosome complex further induces an endonucleolytic cleavage near the 5'UTR of host mRNAs, targeting them for degradation. Viral mRNAs are not susceptible to nsp1-mediated endonucleolytic RNA cleavage thanks to the presence of a 5'-end leader sequence and are therefore protected from degradation. By suppressing host gene expression, nsp1 facilitates efficient viral gene expression in infected cells and evasion from host immune response. May disrupt nuclear pore function by binding and displacing host NUP93. May play a role in the modulation of host cell survival signaling pathway by interacting with host PHB and PHB2. Indeed, these two proteins play a role in maintaining the functional integrity of the mitochondria and protecting cells from various stresses. In terms of biological role, responsible for the cleavages located at the N-terminus of the replicase polyprotein. In addition, PL-PRO possesses a deubiquitinating/deISGylating activity and processes both 'Lys-48'- and 'Lys-63'-linked polyubiquitin chains from cellular substrates. Plays a role in host membrane rearrangement that leads to creation of cytoplasmic double-membrane vesicles (DMV) necessary for viral replication. Nsp3, nsp4 and nsp6 together are sufficient to form DMV. Antagonizes innate immune induction of type I interferon by blocking the phosphorylation, dimerization and subsequent nuclear translocation of host IRF3. Also prevents host NF-kappa-B signaling. Functionally, plays a role in host membrane rearrangement that leads to creation of cytoplasmic double-membrane vesicles (DMV) necessary for viral replication. Alone appears incapable to induce membrane curvature, but together with nsp3 is able to induce paired membranes. Nsp3, nsp4 and nsp6 together are sufficient to form DMV. Its function is as follows. Cleaves the C-terminus of replicase polyprotein at 11 sites. Recognizes substrates containing the core sequence [ILMVF]-Q-|-[SGACN]. May cleave human NLRP1 in lung epithelial cells, thereby activating the NLRP1 inflammasome pathway. Also able to bind an ADP-ribose-1''-phosphate (ADRP). May cleave host ATP6V1G1 thereby modifying host vacuoles intracellular pH. Plays a role in host membrane rearrangement that leads to creation of cytoplasmic double-membrane vesicles (DMV) necessary for viral replication. Nsp3, nsp4 and nsp6 together are sufficient to form DMV. Plays a role in the initial induction of autophagosomes from host endoplasmic reticulum. Later, limits the expansion of these phagosomes that are no longer able to deliver viral components to lysosomes. In terms of biological role, forms a hexadecamer with nsp8 (8 subunits of each) that may participate in viral replication by acting as a primase. Alternatively, may synthesize substantially longer products than oligonucleotide primers. Functionally, forms a hexadecamer with nsp7 (8 subunits of each) that may participate in viral replication by acting as a primase. Alternatively, may synthesize substantially longer products than oligonucleotide primers. Its function is as follows. Forms a primer, NSP9-pU, which is utilized by the polymerase for the initiation of RNA chains. Interacts with ribosome signal recognition particle RNA (SRP). Together with NSP8, suppress protein integration into the cell membrane, thereby disrupting host immune defenses. Plays a pivotal role in viral transcription by stimulating both nsp14 3'-5' exoribonuclease and nsp16 2'-O-methyltransferase activities. Therefore plays an essential role in viral mRNAs cap methylation. In terms of biological role, RNA-directed RNA polymerase that catalyzes the transcription of viral genomic and subgenomic RNAs. Acts in complex with nsp7 and nsp8 to transcribe both the minus and positive strands of genomic RNA. The kinase-like NiRAN domain of NSP12 attaches one or more nucleotides to the amino terminus of NSP9, forming a covalent RNA-protein intermediate that serves as transcription/replication primer. Subgenomic RNAs (sgRNAs) are formed by discontinuous transcription: The polymerase has the ability to pause at transcription-regulating sequences (TRS) and jump to the leader TRS, resulting in a major deletion. This creates a series of subgenomic RNAs that are replicated, transcribed and translated. In addition, Nsp12 is a subunit of the viral RNA capping enzyme that catalyzes the RNA guanylyltransferase reaction for genomic and sub-genomic RNAs. Subsequently, the NiRAN domain transfers RNA to GDP, and forms the core cap structure GpppA-RNA. Functionally, multi-functional protein with a zinc-binding domain in N-terminus displaying RNA and DNA duplex-unwinding activities with 5' to 3' polarity. Activity of helicase is dependent on magnesium. Its function is as follows. Plays a role in viral RNA synthesis through two distinct activities. The N7-guanine methyltransferase activity plays a role in the formation of the cap structure GpppA-RNA. The proofreading exoribonuclease reduces the sensitivity of the virus to RNA mutagens during replication. This activity acts on both ssRNA and dsRNA in a 3'-5' direction. Plays a role in viral transcription/replication and prevents the simultaneous activation of host cell dsRNA sensors, such as MDA5/IFIH1, OAS, and PKR. Acts by degrading the 5'-polyuridines generated during replication of the poly(A) region of viral genomic and subgenomic RNAs. Catalyzes a two-step reaction in which a 2'3'-cyclic phosphate (2'3'-cP) is first generated by 2'-O transesterification, which is then hydrolyzed to a 3'-phosphate (3'-P). If not degraded, poly(U) RNA would hybridize with poly(A) RNA tails and activate host dsRNA sensors. In terms of biological role, methyltransferase that mediates mRNA cap 2'-O-ribose methylation to the 5'-cap structure of viral mRNAs. N7-methyl guanosine cap is a prerequisite for binding of nsp16. Therefore plays an essential role in viral mRNAs cap methylation which is essential to evade immune system. In Severe acute respiratory syndrome coronavirus (SARS-CoV), this protein is Replicase polyprotein 1ab (rep).